The sequence spans 336 residues: Glyceraldehyde-3-phosphate dehydrogenase, plasmid (336 aa).

NAD(+) is bound by residues 12–13 (RI), aspartate 37, arginine 81, and serine 123. D-glyceraldehyde 3-phosphate contacts are provided by residues 154–156 (SCT) and threonine 185. Cysteine 155 acts as the Nucleophile in catalysis. Position 186 (asparagine 186) interacts with NAD(+). Residues arginine 200, 213 to 214 (TG), and arginine 236 each bind D-glyceraldehyde 3-phosphate. Asparagine 317 contributes to the NAD(+) binding site.

This sequence belongs to the glyceraldehyde-3-phosphate dehydrogenase family. In terms of assembly, homotetramer.

The enzyme catalyses D-glyceraldehyde 3-phosphate + phosphate + NAD(+) = (2R)-3-phospho-glyceroyl phosphate + NADH + H(+). Its pathway is carbohydrate biosynthesis; Calvin cycle. Its function is as follows. Could be involved in carbon fixation as a component of the Calvin cycle. Catalyzes the oxidative phosphorylation of glyceraldehyde 3-phosphate (G3P) to 1,3-bisphosphoglycerate (BPG) using the cofactor NAD. The first reaction step involves the formation of a hemiacetal intermediate between G3P and a cysteine residue, and this hemiacetal intermediate is then oxidized to a thioester, with concomitant reduction of NAD to NADH. The reduced NADH is then exchanged with the second NAD, and the thioester is attacked by a nucleophilic inorganic phosphate to produce BPG. In Cupriavidus necator (strain ATCC 17699 / DSM 428 / KCTC 22496 / NCIMB 10442 / H16 / Stanier 337) (Ralstonia eutropha), this protein is Glyceraldehyde-3-phosphate dehydrogenase, plasmid (cbbGP).